The following is a 466-amino-acid chain: 3-isopropylmalate dehydratase large subunit (466 aa).

The [4Fe-4S] cluster site is built by Cys-347, Cys-407, and Cys-410.

Belongs to the aconitase/IPM isomerase family. LeuC type 1 subfamily. In terms of assembly, heterodimer of LeuC and LeuD. [4Fe-4S] cluster serves as cofactor.

The enzyme catalyses (2R,3S)-3-isopropylmalate = (2S)-2-isopropylmalate. It participates in amino-acid biosynthesis; L-leucine biosynthesis; L-leucine from 3-methyl-2-oxobutanoate: step 2/4. Catalyzes the isomerization between 2-isopropylmalate and 3-isopropylmalate, via the formation of 2-isopropylmaleate. The sequence is that of 3-isopropylmalate dehydratase large subunit from Escherichia coli O139:H28 (strain E24377A / ETEC).